A 361-amino-acid polypeptide reads, in one-letter code: GDP-mannose 4,6 dehydratase 1 (361 aa).

Residues 23–28 (GITGQD), 79–80 (DL), 101–105 (LAAQS), and tyrosine 116 each bind NADP(+). Residue serine 150 is part of the active site. Active-site nucleophile residues include glutamate 152 and tyrosine 173. Positions 177, 203, and 208 each coordinate NADP(+).

It belongs to the NAD(P)-dependent epimerase/dehydratase family. GDP-mannose 4,6-dehydratase subfamily. Homotetramer. The cofactor is NADP(+). As to expression, expressed in roots,stipules and pollen just before anthesis. Primarily localized to the root meristem and columella root cap. Not expressed in emerging lateral roots.

The enzyme catalyses GDP-alpha-D-mannose = GDP-4-dehydro-alpha-D-rhamnose + H2O. It participates in nucleotide-sugar biosynthesis; GDP-L-fucose biosynthesis via de novo pathway; GDP-L-fucose from GDP-alpha-D-mannose: step 1/2. Its function is as follows. Catalyzes the conversion of GDP-D-mannose to GDP-4-dehydro-6-deoxy-D-mannose. The polypeptide is GDP-mannose 4,6 dehydratase 1 (GMD1) (Arabidopsis thaliana (Mouse-ear cress)).